Here is a 418-residue protein sequence, read N- to C-terminus: Gamma-glutamyl phosphate reductase (418 aa).

The protein belongs to the gamma-glutamyl phosphate reductase family.

Its subcellular location is the cytoplasm. The enzyme catalyses L-glutamate 5-semialdehyde + phosphate + NADP(+) = L-glutamyl 5-phosphate + NADPH + H(+). The protein operates within amino-acid biosynthesis; L-proline biosynthesis; L-glutamate 5-semialdehyde from L-glutamate: step 2/2. In terms of biological role, catalyzes the NADPH-dependent reduction of L-glutamate 5-phosphate into L-glutamate 5-semialdehyde and phosphate. The product spontaneously undergoes cyclization to form 1-pyrroline-5-carboxylate. In Moorella thermoacetica (strain ATCC 39073 / JCM 9320), this protein is Gamma-glutamyl phosphate reductase.